Reading from the N-terminus, the 404-residue chain is Phosphoglycerate kinase (404 aa).

Residues 21 to 23 (DFN), R38, 61 to 64 (HLGR), R126, and R159 each bind substrate. ATP contacts are provided by residues K210, E333, and 360–363 (GGDS).

The protein belongs to the phosphoglycerate kinase family. In terms of assembly, monomer.

The protein localises to the cytoplasm. The enzyme catalyses (2R)-3-phosphoglycerate + ATP = (2R)-3-phospho-glyceroyl phosphate + ADP. Its pathway is carbohydrate degradation; glycolysis; pyruvate from D-glyceraldehyde 3-phosphate: step 2/5. The chain is Phosphoglycerate kinase from Acidobacterium capsulatum (strain ATCC 51196 / DSM 11244 / BCRC 80197 / JCM 7670 / NBRC 15755 / NCIMB 13165 / 161).